The following is a 278-amino-acid chain: Msm operon regulatory protein (278 aa).

An HTH araC/xylS-type domain is found at 176–274 (NQVKKIIHSQ…GKSPSKFRKE (99 aa)). 2 DNA-binding regions (H-T-H motif) span residues 193 to 214 (NDIA…RKST) and 241 to 264 (IAEI…KNYF).

In terms of biological role, regulatory protein for the msm operon for multiple sugar metabolism. Activates the transcription of the msmEFGK, aga, dexB and gftA genes. This is Msm operon regulatory protein (msmR) from Streptococcus mutans serotype c (strain ATCC 700610 / UA159).